A 478-amino-acid chain; its full sequence is Proline--tRNA ligase (478 aa).

This sequence belongs to the class-II aminoacyl-tRNA synthetase family. ProS type 3 subfamily. In terms of assembly, homodimer.

The protein localises to the cytoplasm. The enzyme catalyses tRNA(Pro) + L-proline + ATP = L-prolyl-tRNA(Pro) + AMP + diphosphate. Catalyzes the attachment of proline to tRNA(Pro) in a two-step reaction: proline is first activated by ATP to form Pro-AMP and then transferred to the acceptor end of tRNA(Pro). In Clostridium botulinum (strain Kyoto / Type A2), this protein is Proline--tRNA ligase.